The following is a 350-amino-acid chain: tRNA uridine(34) hydroxylase (350 aa).

The region spanning 128–221 (EETDYVMIDT…YMKEYPNDQF (94 aa)) is the Rhodanese domain. The Cysteine persulfide intermediate role is filled by Cys-181.

Belongs to the TrhO family.

The catalysed reaction is uridine(34) in tRNA + AH2 + O2 = 5-hydroxyuridine(34) in tRNA + A + H2O. Catalyzes oxygen-dependent 5-hydroxyuridine (ho5U) modification at position 34 in tRNAs. This is tRNA uridine(34) hydroxylase from Bdellovibrio bacteriovorus (strain ATCC 15356 / DSM 50701 / NCIMB 9529 / HD100).